Consider the following 968-residue polypeptide: Glycine dehydrogenase (decarboxylating) (968 aa).

Lys712 bears the N6-(pyridoxal phosphate)lysine mark.

It belongs to the GcvP family. In terms of assembly, the glycine cleavage system is composed of four proteins: P, T, L and H. Requires pyridoxal 5'-phosphate as cofactor.

It carries out the reaction N(6)-[(R)-lipoyl]-L-lysyl-[glycine-cleavage complex H protein] + glycine + H(+) = N(6)-[(R)-S(8)-aminomethyldihydrolipoyl]-L-lysyl-[glycine-cleavage complex H protein] + CO2. Functionally, the glycine cleavage system catalyzes the degradation of glycine. The P protein binds the alpha-amino group of glycine through its pyridoxal phosphate cofactor; CO(2) is released and the remaining methylamine moiety is then transferred to the lipoamide cofactor of the H protein. This chain is Glycine dehydrogenase (decarboxylating), found in Prochlorococcus marinus (strain NATL2A).